Here is a 709-residue protein sequence, read N- to C-terminus: Homeobox-leucine zipper protein HDG4 (709 aa).

Residues 61-92 (ESGSGKSTGSGHDPVENTAIEQEPPAAKKKRY) are disordered. A DNA-binding region (homeobox) is located at residues 88–147 (KKKRYHRHTASQIQQMEALFKENAHPDTKTRLRLSKKLGLSPIQVKFWFQNKRTQIKAQQ). A coiled-coil region spans residues 137–205 (QNKRTQIKAQ…LDRLRSIVSM (69 aa)). Positions 229-466 (AEEEKAIDME…LKRQCERMAS (238 aa)) constitute an START domain.

This sequence belongs to the HD-ZIP homeobox family. Class IV subfamily. As to expression, expressed in flowers.

The protein localises to the nucleus. Its function is as follows. Probable transcription factor. This chain is Homeobox-leucine zipper protein HDG4, found in Arabidopsis thaliana (Mouse-ear cress).